A 271-amino-acid chain; its full sequence is Tryptophan synthase alpha chain (271 aa).

Active-site proton acceptor residues include glutamate 49 and aspartate 60.

Belongs to the TrpA family. In terms of assembly, tetramer of two alpha and two beta chains.

It carries out the reaction (1S,2R)-1-C-(indol-3-yl)glycerol 3-phosphate + L-serine = D-glyceraldehyde 3-phosphate + L-tryptophan + H2O. Its pathway is amino-acid biosynthesis; L-tryptophan biosynthesis; L-tryptophan from chorismate: step 5/5. The alpha subunit is responsible for the aldol cleavage of indoleglycerol phosphate to indole and glyceraldehyde 3-phosphate. In Azoarcus sp. (strain BH72), this protein is Tryptophan synthase alpha chain.